The chain runs to 227 residues: 7-cyano-7-deazaguanine synthase (227 aa).

8–18 (FSGGQDSTTCL) lines the ATP pocket. Residues cysteine 187, cysteine 196, cysteine 199, and cysteine 202 each coordinate Zn(2+).

The protein belongs to the QueC family. Zn(2+) serves as cofactor.

The enzyme catalyses 7-carboxy-7-deazaguanine + NH4(+) + ATP = 7-cyano-7-deazaguanine + ADP + phosphate + H2O + H(+). Its pathway is purine metabolism; 7-cyano-7-deazaguanine biosynthesis. Its function is as follows. Catalyzes the ATP-dependent conversion of 7-carboxy-7-deazaguanine (CDG) to 7-cyano-7-deazaguanine (preQ(0)). In Shewanella pealeana (strain ATCC 700345 / ANG-SQ1), this protein is 7-cyano-7-deazaguanine synthase.